The chain runs to 842 residues: Pentatricopeptide repeat-containing protein At3g22690 (842 aa).

PPR repeat units lie at residues 98–132 (TCFMYNSLIRGYASSGLCNEAILLFLRMMNSGISP), 133–167 (DKYTFPFGLSACAKSRAKGNGIQIHGLIVKMGYAK), 168–202 (DLFVQNSLVHFYAECGELDSARKVFDEMSERNVVS), 203–234 (WTSMICGYARRDFAKDAVDLFFRMVRDEEVTP), 235–269 (NSVTMVCVISACAKLEDLETGEKVYAFIRNSGIEV), 270–300 (NDLMVSALVDMYMKCNAIDVAKRLFDEYGAS), 301–335 (NLDLCNAMASNYVRQGLTREALGVFNLMMDSGVRP), 336–370 (DRISMLSAISSCSQLRNILWGKSCHGYVLRNGFES), 371–401 (WDNICNALIDMYMKCHRQDTAFRIFDRMSNK), 402–436 (TVVTWNSIVAGYVENGEVDAAWETFETMPEKNIVS), 437–463 (WNTIISGLVQGSLFEEAIEVFCSMQSQ), 469–503 (DGVTMMSIASACGHLGALDLAKWIYYYIEKNGIQL), 504–534 (DVRLGTTLVDMFSRCGDPESAMSIFNSLTNR), 535–569 (DVSAWTAAIGAMAMAGNAERAIELFDDMIEQGLKP), 570–605 (DGVAFVGALTACSHGGLVQQGKEIFYSMLKLHGVSP), and 606–636 (EDVHYGCMVDLLGRAGLLEEAVQLIEDMPME). Residues 641-716 (IWNSLLAACR…PPGTSSIQIR (76 aa)) are type E motif. The interval 717 to 747 (GKTHEFTSGDESHPEMPNIEAMLDEVSQRAS) is type E(+) motif. The type DYW motif stretch occupies residues 748-842 (HLGHVPDLSN…QGKCSCGDFW (95 aa)).

Belongs to the PPR family. PCMP-H subfamily.

This chain is Pentatricopeptide repeat-containing protein At3g22690 (PCMP-H56), found in Arabidopsis thaliana (Mouse-ear cress).